We begin with the raw amino-acid sequence, 288 residues long: Phenazine biosynthesis-like domain-containing protein (288 aa).

Residue Glu-46 is part of the active site.

It belongs to the PhzF family. As to quaternary structure, interacts with UNRIP/MAWD.

This chain is Phenazine biosynthesis-like domain-containing protein (PBLD), found in Homo sapiens (Human).